The primary structure comprises 603 residues: Probable GMP synthase [glutamine-hydrolyzing] (603 aa).

Positions 6–195 constitute a Glutamine amidotransferase type-1 domain; the sequence is KIAVVDFGGQ…FIQICGVSKT (190 aa). Cysteine 81 (nucleophile) is an active-site residue. Residues histidine 170 and glutamate 172 contribute to the active site. The GMPS ATP-PPase domain maps to 196–392; it reads WGIDQFLKEK…LGLESEWVGR (197 aa). 224–230 serves as a coordination point for ATP; the sequence is SGGVDST.

In terms of assembly, homodimer.

The catalysed reaction is XMP + L-glutamine + ATP + H2O = GMP + L-glutamate + AMP + diphosphate + 2 H(+). Its pathway is purine metabolism; GMP biosynthesis; GMP from XMP (L-Gln route): step 1/1. Functionally, catalyzes the synthesis of GMP from XMP. This Leptospira interrogans serogroup Icterohaemorrhagiae serovar copenhageni (strain Fiocruz L1-130) protein is Probable GMP synthase [glutamine-hydrolyzing] (guaA).